Here is a 487-residue protein sequence, read N- to C-terminus: Probable glutamate receptor (487 aa).

An N-terminal signal peptide occupies residues methionine 1–histidine 23. Residues alanine 24–lysine 169 are Extracellular-facing. Asparagine 104 carries N-linked (GlcNAc...) asparagine glycosylation. Residues glutamate 170–alanine 190 form a helical membrane-spanning segment. Residues arginine 191–arginine 235 lie on the Cytoplasmic side of the membrane. The chain crosses the membrane as a helical span at residues valine 236–phenylalanine 256. At threonine 257–alanine 419 the chain is on the extracellular side. Residues leucine 420–valine 440 form a helical membrane-spanning segment. Topologically, residues glutamate 441 to alanine 487 are cytoplasmic.

Belongs to the glutamate-gated ion channel (TC 1.A.10.1) family.

It is found in the cell membrane. The protein resides in the postsynaptic cell membrane. In terms of biological role, receptor for glutamate. L-glutamate acts as an excitatory neurotransmitter at many synapses in the central nervous system. The postsynaptic actions of Glu are mediated by a variety of receptors that are named according to their selective agonists. The polypeptide is Probable glutamate receptor (KBP) (Anas platyrhynchos (Mallard)).